Consider the following 370-residue polypeptide: MTQIIIAGAVSFLVAIFTTPVLIRYFSDTGRGQEIREDGPKSHLRKRGTPTMGGLAILAGILVAYVVAGLYGLLTGHEAFTASGLLVLGLTLGLGAVGFADDFIKLFRHRNLGLNKTAKLISQLVLALLFGFLVLRFPNDAGLTPGSTKLSFIRDLKTFDLAVGGTVIGTIVFLIFMYILIAAWSNAVNLTDGLDGLAAGVTAIVMGSYSLMTFWQFRYSCATNFAAGCYQVRDPLDLAVLAAAGLGGCLGFLWWNAAPAKIFMGDTGSLALGGLVAGISVTSRTELLMIIIGALFVIETVSVVIQIVVFHSTGKRFFRMAPIHHHFENGGWAETAVVVRFWLLAAMAAMAGVAIFYGDWLTASGIGVGA.

Helical transmembrane passes span 3–23, 54–74, 79–99, 118–138, 161–181, 197–217, 238–258, 262–282, 290–310, and 341–361; these read QIII…PVLI, GLAI…YGLL, AFTA…AVGF, AKLI…LRFP, LAVG…YILI, LAAG…FWQF, LAVL…WNAA, IFMG…ISVT, IIIG…IVVF, and FWLL…GDWL.

It belongs to the glycosyltransferase 4 family. MraY subfamily. The cofactor is Mg(2+).

It localises to the cell membrane. The enzyme catalyses UDP-N-acetyl-alpha-D-muramoyl-L-alanyl-gamma-D-glutamyl-meso-2,6-diaminopimeloyl-D-alanyl-D-alanine + di-trans,octa-cis-undecaprenyl phosphate = di-trans,octa-cis-undecaprenyl diphospho-N-acetyl-alpha-D-muramoyl-L-alanyl-D-glutamyl-meso-2,6-diaminopimeloyl-D-alanyl-D-alanine + UMP. Its pathway is cell wall biogenesis; peptidoglycan biosynthesis. Functionally, catalyzes the initial step of the lipid cycle reactions in the biosynthesis of the cell wall peptidoglycan: transfers peptidoglycan precursor phospho-MurNAc-pentapeptide from UDP-MurNAc-pentapeptide onto the lipid carrier undecaprenyl phosphate, yielding undecaprenyl-pyrophosphoryl-MurNAc-pentapeptide, known as lipid I. The protein is Phospho-N-acetylmuramoyl-pentapeptide-transferase of Corynebacterium aurimucosum (strain ATCC 700975 / DSM 44827 / CIP 107346 / CN-1) (Corynebacterium nigricans).